A 605-amino-acid chain; its full sequence is Formin-binding protein 1-like (605 aa).

In terms of domain architecture, F-BAR spans 1–263 (MSWGTELWDQ…AAKSVDERRD (263 aa)). Positions 66–258 (FTSCVAFFNI…EGMILAAKSV (193 aa)) form a coiled coil. Residues 245-535 (SKCLEGMILA…EFDDEFEDDD (291 aa)) are interaction with CDC42. S295 is modified (phosphoserine). Residues 392 to 484 (LEDFSHLPPE…VEGKTGGRGD (93 aa)) are a coiled coil. One can recognise an REM-1 domain in the interval 397 to 474 (HLPPEQRRKK…IHKNEAWLSE (78 aa)). Basic and acidic residues predominate over residues 476–490 (EGKTGGRGDRRHSSD). The segment at 476–539 (EGKTGGRGDR…EFEDDDPLPA (64 aa)) is disordered. S488, S501, and S505 each carry phosphoserine. The interval 522–605 (GHHNEFDDEF…VTLEKNSKGS (84 aa)) is interaction with DNM1. Positions 527–536 (FDDEFEDDDP) are enriched in acidic residues. The region spanning 538 to 599 (PAIGHCKAIY…PTSYIDVTLE (62 aa)) is the SH3 domain. An interaction with DNM2 and WASL region spans residues 541 to 597 (GHCKAIYPFDGHNEGTLAMKEGEVLYIIEEDKGDGWTRARRQNGEEGYVPTSYIDVT). Residues 541 to 605 (GHCKAIYPFD…VTLEKNSKGS (65 aa)) are interaction with DAAM1, DIAPH1 and DIAPH2.

It belongs to the FNBP1 family. In terms of assembly, homodimerizes, the dimers can polymerize end-to-end to form filamentous structures. Interacts with GTP-bound CDC42. Interacts with DAAM1, DIAPH1, DIAPH2, DNM1, DNM2 and WASL/N-WASP. Interacts with ATG3. Interacts (via SH3 domain) with ABI1, WASF2, CDC42 and WIPF1.

The protein resides in the cytoplasm. It is found in the cytoskeleton. The protein localises to the cell cortex. It localises to the cytoplasmic vesicle. Its subcellular location is the cell membrane. Functionally, required to coordinate membrane tubulation with reorganization of the actin cytoskeleton during endocytosis. May bind to lipids such as phosphatidylinositol 4,5-bisphosphate and phosphatidylserine and promote membrane invagination and the formation of tubules. Also promotes CDC42-induced actin polymerization by activating the WASL/N-WASP-WASPIP/WIP complex, the predominant form of WASL/N-WASP in cells. Actin polymerization may promote the fission of membrane tubules to form endocytic vesicles. Essential for autophagy of intracellular bacterial pathogens. The sequence is that of Formin-binding protein 1-like (FNBP1L) from Homo sapiens (Human).